The sequence spans 169 residues: Small ribosomal subunit protein uS5 (169 aa).

Residues 14–77 form the S5 DRBM domain; sequence LQEKVVEVRR…EDAKKNLIVV (64 aa).

This sequence belongs to the universal ribosomal protein uS5 family. Part of the 30S ribosomal subunit. Contacts proteins S4 and S8.

Functionally, with S4 and S12 plays an important role in translational accuracy. Its function is as follows. Located at the back of the 30S subunit body where it stabilizes the conformation of the head with respect to the body. The polypeptide is Small ribosomal subunit protein uS5 (Clostridioides difficile (strain 630) (Peptoclostridium difficile)).